A 293-amino-acid polypeptide reads, in one-letter code: Tyrosine recombinase XerD (293 aa).

The 83-residue stretch at 1–83 (MHGLIADFIH…ALRKFYRFLL (83 aa)) folds into the Core-binding (CB) domain. Positions 104–287 (HLPATLSGTE…SNQHLVAVYH (184 aa)) constitute a Tyr recombinase domain. Residues R144, K168, H239, R242, and H265 contribute to the active site. Y274 serves as the catalytic O-(3'-phospho-DNA)-tyrosine intermediate.

This sequence belongs to the 'phage' integrase family. XerD subfamily. In terms of assembly, forms a cyclic heterotetrameric complex composed of two molecules of XerC and two molecules of XerD.

The protein localises to the cytoplasm. Its function is as follows. Site-specific tyrosine recombinase, which acts by catalyzing the cutting and rejoining of the recombining DNA molecules. The XerC-XerD complex is essential to convert dimers of the bacterial chromosome into monomers to permit their segregation at cell division. It also contributes to the segregational stability of plasmids. The sequence is that of Tyrosine recombinase XerD from Lacticaseibacillus casei (Lactobacillus casei).